The following is a 319-amino-acid chain: NADH-quinone oxidoreductase subunit H 1 (319 aa).

Helical transmembrane passes span 5–25, 78–98, 109–129, 147–167, 179–199, 214–234, 238–258, 262–282, and 294–314; these read ILTA…AGVF, LAPA…AFGE, VMFL…GALA, LAYE…AGSL, VWFI…GIAA, LVGG…FLGE, ILLV…GPWL, IWFG…RAAL, and AWKV…FIVV.

It belongs to the complex I subunit 1 family. NDH-1 is composed of 14 different subunits. Subunits NuoA, H, J, K, L, M, N constitute the membrane sector of the complex.

The protein resides in the cell inner membrane. It catalyses the reaction a quinone + NADH + 5 H(+)(in) = a quinol + NAD(+) + 4 H(+)(out). Its function is as follows. NDH-1 shuttles electrons from NADH, via FMN and iron-sulfur (Fe-S) centers, to quinones in the respiratory chain. The immediate electron acceptor for the enzyme in this species is believed to be ubiquinone. Couples the redox reaction to proton translocation (for every two electrons transferred, four hydrogen ions are translocated across the cytoplasmic membrane), and thus conserves the redox energy in a proton gradient. This subunit may bind ubiquinone. In Rhodopseudomonas palustris (strain BisA53), this protein is NADH-quinone oxidoreductase subunit H 1.